The chain runs to 366 residues: Chorismate synthase (366 aa).

Position 48 (R48) interacts with NADP(+). FMN-binding positions include 131–133, 243–244, G288, 303–307, and R329; these read RAS, NA, and KPTSS.

It belongs to the chorismate synthase family. As to quaternary structure, homotetramer. FMNH2 serves as cofactor.

It carries out the reaction 5-O-(1-carboxyvinyl)-3-phosphoshikimate = chorismate + phosphate. Its pathway is metabolic intermediate biosynthesis; chorismate biosynthesis; chorismate from D-erythrose 4-phosphate and phosphoenolpyruvate: step 7/7. Its function is as follows. Catalyzes the anti-1,4-elimination of the C-3 phosphate and the C-6 proR hydrogen from 5-enolpyruvylshikimate-3-phosphate (EPSP) to yield chorismate, which is the branch point compound that serves as the starting substrate for the three terminal pathways of aromatic amino acid biosynthesis. This reaction introduces a second double bond into the aromatic ring system. This Bartonella henselae (strain ATCC 49882 / DSM 28221 / CCUG 30454 / Houston 1) (Rochalimaea henselae) protein is Chorismate synthase.